The sequence spans 67 residues: DNA gyrase inhibitor YacG (67 aa).

Zn(2+) contacts are provided by Cys-8, Cys-11, Cys-27, and Cys-31.

Belongs to the DNA gyrase inhibitor YacG family. As to quaternary structure, interacts with GyrB. It depends on Zn(2+) as a cofactor.

Its function is as follows. Inhibits all the catalytic activities of DNA gyrase by preventing its interaction with DNA. Acts by binding directly to the C-terminal domain of GyrB, which probably disrupts DNA binding by the gyrase. The polypeptide is DNA gyrase inhibitor YacG (Ralstonia pickettii (strain 12J)).